The chain runs to 197 residues: MAVVPIRIVGDPVLHTPTQPVPVGDDGSLPADLGKLIADMYDTMDAAHGVGLAANQIGVGLRVFVYDCADDRGLTERRRGVVVNPVLETSEIPETMPDPDTDDEGCLSVPGESFPTGRASWARVTGLDADGNPVSIEGHGLFARMLQHETGHLDGFLYLDRLIGRYARSAKRAVKSHNWGVPGLSWMPGEGPDPFGH.

Fe cation is bound by residues Cys-106 and His-148. Residue Glu-149 is part of the active site. His-152 provides a ligand contact to Fe cation.

It belongs to the polypeptide deformylase family. Requires Fe(2+) as cofactor.

The enzyme catalyses N-terminal N-formyl-L-methionyl-[peptide] + H2O = N-terminal L-methionyl-[peptide] + formate. In terms of biological role, removes the formyl group from the N-terminal Met of newly synthesized proteins. Requires at least a dipeptide for an efficient rate of reaction. N-terminal L-methionine is a prerequisite for activity but the enzyme has broad specificity at other positions. The chain is Peptide deformylase from Mycolicibacterium paratuberculosis (strain ATCC BAA-968 / K-10) (Mycobacterium paratuberculosis).